Reading from the N-terminus, the 738-residue chain is Pentatricopeptide repeat-containing protein At5g65570 (738 aa).

PPR repeat units lie at residues 98 to 128, 129 to 163, 164 to 198, 200 to 230, 231 to 265, 266 to 300, 301 to 331, 332 to 366, 367 to 401, 402 to 432, 433 to 467, 468 to 502, and 503 to 537; these read AEISGSKLVDASLKCGDIDYARQVFDGMSER, HIVTWNSLIAYLIKHRRSKEAVEMYRLMITNNVLP, DEYTLSSVFKAFSDLSLEKEAQRSHGLAVILGLEV, NVFVGSALVDMYVKFGKTREAKLVLDRVEEK, DVVLITALIVGYSQKGEDTEAVKAFQSMLVEKVQP, NEYTYASVLISCGNLKDIGNGKLIHGLMVKSGFES, ALASQTSLLTMYLRCSLVDDSLRVFKCIEYP, NQVSWTSLISGLVQNGREEMALIEFRKMMRDSIKP, NSFTLSSALRGCSNLAMFEEGRQIHGIVTKYGFDR, DKYAGSGLIDLYGKCGCSDMARLVFDTLSEV, DVISLNTMIYSYAQNGFGREALDLFERMINLGLQP, NDVTVLSVLLACNNSRLVEEGCELFDSFRKDKIML, and TNDHYACMVDLLGRAGRLEEAEMLTTEVINPDLVL. A type E motif region spans residues 537 to 612; that stretch reads LWRTLLSACK…NPAMSWVEIN (76 aa). A type E(+) motif region spans residues 613–644; that stretch reads KETHTFMAGDLFSHPNSEQILENLEELIKKSK. The interval 645–738 is type DYW motif; it reads DLGYVEDKSC…DGSCSCGDYW (94 aa).

Belongs to the PPR family. PCMP-H subfamily.

This is Pentatricopeptide repeat-containing protein At5g65570 (PCMP-H47) from Arabidopsis thaliana (Mouse-ear cress).